A 416-amino-acid chain; its full sequence is Histidine--tRNA ligase (416 aa).

This sequence belongs to the class-II aminoacyl-tRNA synthetase family.

The protein resides in the cytoplasm. The enzyme catalyses tRNA(His) + L-histidine + ATP = L-histidyl-tRNA(His) + AMP + diphosphate + H(+). In Methanocaldococcus jannaschii (strain ATCC 43067 / DSM 2661 / JAL-1 / JCM 10045 / NBRC 100440) (Methanococcus jannaschii), this protein is Histidine--tRNA ligase (hisS).